The following is a 444-amino-acid chain: Na(+)/H(+) antiporter NhaA (444 aa).

A run of 11 helical transmembrane segments spans residues T27–L47, I72–I92, M108–I128, A136–L156, F167–Y187, E190–N210, F212–L232, H312–I332, V349–I369, V385–L405, and I419–I439.

This sequence belongs to the NhaA Na(+)/H(+) (TC 2.A.33) antiporter family.

The protein resides in the cell inner membrane. It catalyses the reaction Na(+)(in) + 2 H(+)(out) = Na(+)(out) + 2 H(+)(in). In terms of biological role, na(+)/H(+) antiporter that extrudes sodium in exchange for external protons. In Sulfurimonas denitrificans (strain ATCC 33889 / DSM 1251) (Thiomicrospira denitrificans (strain ATCC 33889 / DSM 1251)), this protein is Na(+)/H(+) antiporter NhaA.